The sequence spans 480 residues: Ammonium transporter 3 member 3 (480 aa).

A run of 11 helical transmembrane segments spans residues 31 to 51 (SATL…GSIV), 59 to 79 (SAFM…VWAY), 135 to 155 (MVYF…GSLL), 169 to 189 (LWIT…GFLF), 198 to 218 (GGYV…YWVG), 233 to 253 (ILLV…FNGG), 265 to 287 (AVLN…DVFF), 292 to 314 (SVIG…AGLV), 318 to 337 (AAIV…MMVL), 361 to 381 (GFLG…SLFL), and 407 to 427 (LFVT…ISLI).

It belongs to the ammonia transporter channel (TC 1.A.11.2) family.

The protein localises to the membrane. In terms of biological role, involved in ammonium transport. The chain is Ammonium transporter 3 member 3 (AMT3-3) from Oryza sativa subsp. japonica (Rice).